A 355-amino-acid polypeptide reads, in one-letter code: Blue-sensitive opsin P467 (355 aa).

At 1-36 (MNGTEGINFYVPLSNKTGLVRSPFEYPQYYLADPWK) the chain is on the extracellular side. N2 and N15 each carry an N-linked (GlcNAc...) asparagine glycan. The chain crosses the membrane as a helical span at residues 37–61 (FKVLSFYMFFLIAAGMPLNGLTLFV). Over 62–73 (TFQHKKLRQPLN) the chain is Cytoplasmic. The chain crosses the membrane as a helical span at residues 74 to 98 (YILVNLAAANLVTVCCGFTVTFYAS). Topologically, residues 99 to 113 (WYAYFVFGPIGCAIE) are extracellular. A disulfide bridge connects residues C110 and C187. The helical transmembrane segment at 114 to 133 (GFFATIGGQVALWSLVVLAI) threads the bilayer. Topologically, residues 134 to 152 (ERYIVICKPMGNFRFSATH) are cytoplasmic. Residues 153-176 (AIMGIAFTWFMALACAGPPLFGWS) form a helical membrane-spanning segment. Residues 177–202 (RFIPEGMQCSCGPDYYTLNPDFHNES) lie on the Extracellular side of the membrane. The N-linked (GlcNAc...) asparagine glycan is linked to N200. Residues 203–230 (YVIYMFIVHFTVPMVVIFFSYGRLVCKV) traverse the membrane as a helical segment. At 231–252 (REAAAQQQESATTQKAEKEVTR) the chain is on the cytoplasmic side. The chain crosses the membrane as a helical span at residues 253-276 (MVILMVLGFLLAWTPYAATAIWIF). Topologically, residues 277 to 284 (TNRGAAFS) are extracellular. A helical transmembrane segment spans residues 285 to 309 (VTFMTIPAFFSKSSSIYNPIIYVLL). K296 carries the post-translational modification N6-(retinylidene)lysine. Topologically, residues 310-355 (NKQFRNCMVTTICCGKNPFGDEDVSSSVSQSKTEVSSVSSSQVAPA) are cytoplasmic. Positions 333–355 (VSSSVSQSKTEVSSVSSSQVAPA) are disordered. A compositionally biased stretch (low complexity) spans 334–355 (SSSVSQSKTEVSSVSSSQVAPA).

It belongs to the G-protein coupled receptor 1 family. Opsin subfamily. Phosphorylated on some or all of the serine and threonine residues present in the C-terminal region. In this lizard the color pigments are found in the rod-shaped photoreceptor cells which have been derived from ancestral cone-like photoreceptors.

Its subcellular location is the membrane. Its function is as follows. Visual pigments are the light-absorbing molecules that mediate vision. They consist of an apoprotein, opsin, covalently linked to cis-retinal. The sequence is that of Blue-sensitive opsin P467 from Gekko gecko (Tokay gecko).